A 466-amino-acid chain; its full sequence is Arginine biosynthesis bifunctional protein ArgJ, mitochondrial (466 aa).

The transit peptide at 1 to 9 (MSSLVLKRF) directs the protein to the mitochondrion. Substrate is bound by residues T183, K209, T232, E320, N461, and S466. T232 acts as the Nucleophile in catalysis.

This sequence belongs to the ArgJ family. In terms of assembly, heterodimer of an alpha and a beta chain. Post-translationally, the alpha and beta chains are autoproteolytically processed from a single precursor protein within the mitochondrion.

It localises to the mitochondrion matrix. It carries out the reaction N(2)-acetyl-L-ornithine + L-glutamate = N-acetyl-L-glutamate + L-ornithine. The enzyme catalyses L-glutamate + acetyl-CoA = N-acetyl-L-glutamate + CoA + H(+). It functions in the pathway amino-acid biosynthesis; L-arginine biosynthesis; L-ornithine and N-acetyl-L-glutamate from L-glutamate and N(2)-acetyl-L-ornithine (cyclic): step 1/1. It participates in amino-acid biosynthesis; L-arginine biosynthesis; N(2)-acetyl-L-ornithine from L-glutamate: step 1/4. In terms of biological role, catalyzes two activities which are involved in the cyclic version of arginine biosynthesis: the synthesis of acetylglutamate from glutamate and acetyl-CoA, and of ornithine by transacetylation between acetylornithine and glutamate. The chain is Arginine biosynthesis bifunctional protein ArgJ, mitochondrial from Laccaria bicolor (strain S238N-H82 / ATCC MYA-4686) (Bicoloured deceiver).